We begin with the raw amino-acid sequence, 524 residues long: Translation initiation factor eIF2B subunit delta (524 aa).

The disordered stretch occupies residues 1-174 (MAAVAVAVRE…RQQVPTRKDY (174 aa)). The residue at position 2 (alanine 2) is an N-acetylalanine. Composition is skewed to basic and acidic residues over residues 8–20 (VREESRSEMKTEL) and 31–40 (LTQEEKLQLR). The residue at position 12 (serine 12) is a Phosphoserine. Over residues 41-51 (KEKKQQKKKRK) the composition is skewed to basic residues. Phosphothreonine is present on threonine 86. 2 stretches are compositionally biased toward basic and acidic residues: residues 96–121 (SKAELRAERRAKQEAERALKQARKGE) and 161–174 (RKPDRQQVPTRKDY). The tract at residues 171 to 180 (RKDYGSKVSL) is may bind the chemical integrated stress response (ISR) inhibitor ISRIB.

The protein belongs to the eIF-2B alpha/beta/delta subunits family. In terms of assembly, component of the translation initiation factor 2B (eIF2B) complex which is a heterodecamer of two sets of five different subunits: alpha, beta, gamma, delta and epsilon. Subunits alpha, beta and delta comprise a regulatory subcomplex and subunits epsilon and gamma comprise a catalytic subcomplex. Within the complex, the hexameric regulatory complex resides at the center, with the two heterodimeric catalytic subcomplexes bound on opposite sides.

It localises to the cytoplasm. It is found in the cytosol. Its activity is regulated as follows. Activated by the chemical integrated stress response (ISR) inhibitor ISRIB which stimulates guanine nucleotide exchange factor activity for both phosphorylated and unphosphorylated eIF2. Functionally, acts as a component of the translation initiation factor 2B (eIF2B) complex, which catalyzes the exchange of GDP for GTP on eukaryotic initiation factor 2 (eIF2) gamma subunit. Its guanine nucleotide exchange factor activity is repressed when bound to eIF2 complex phosphorylated on the alpha subunit, thereby limiting the amount of methionyl-initiator methionine tRNA available to the ribosome and consequently global translation is repressed. This chain is Translation initiation factor eIF2B subunit delta (Eif2b4), found in Rattus norvegicus (Rat).